The primary structure comprises 368 residues: Phospho-N-acetylmuramoyl-pentapeptide-transferase (368 aa).

Helical transmembrane passes span 31–51, 73–93, 98–118, 134–154, 175–195, 213–233, 249–269, 271–291, 296–316, and 345–365; these read LTSM…LYGL, TMGG…WGNL, VILL…DDYM, FILS…YTGT, GPVI…IIGS, VLIS…PIVA, VFLS…AHPA, VFMG…IVIL, ILLL…ILQV, and KIVI…LSTL.

This sequence belongs to the glycosyltransferase 4 family. MraY subfamily. It depends on Mg(2+) as a cofactor.

The protein localises to the cell inner membrane. It catalyses the reaction UDP-N-acetyl-alpha-D-muramoyl-L-alanyl-gamma-D-glutamyl-meso-2,6-diaminopimeloyl-D-alanyl-D-alanine + di-trans,octa-cis-undecaprenyl phosphate = di-trans,octa-cis-undecaprenyl diphospho-N-acetyl-alpha-D-muramoyl-L-alanyl-D-glutamyl-meso-2,6-diaminopimeloyl-D-alanyl-D-alanine + UMP. Its pathway is cell wall biogenesis; peptidoglycan biosynthesis. In terms of biological role, catalyzes the initial step of the lipid cycle reactions in the biosynthesis of the cell wall peptidoglycan: transfers peptidoglycan precursor phospho-MurNAc-pentapeptide from UDP-MurNAc-pentapeptide onto the lipid carrier undecaprenyl phosphate, yielding undecaprenyl-pyrophosphoryl-MurNAc-pentapeptide, known as lipid I. This is Phospho-N-acetylmuramoyl-pentapeptide-transferase from Leptospira interrogans serogroup Icterohaemorrhagiae serovar copenhageni (strain Fiocruz L1-130).